The primary structure comprises 618 residues: DNA mismatch repair protein MutL (618 aa).

The protein belongs to the DNA mismatch repair MutL/HexB family.

In terms of biological role, this protein is involved in the repair of mismatches in DNA. It is required for dam-dependent methyl-directed DNA mismatch repair. May act as a 'molecular matchmaker', a protein that promotes the formation of a stable complex between two or more DNA-binding proteins in an ATP-dependent manner without itself being part of a final effector complex. The protein is DNA mismatch repair protein MutL of Bradyrhizobium sp. (strain BTAi1 / ATCC BAA-1182).